A 694-amino-acid polypeptide reads, in one-letter code: MKHLKRWWSAGGGLLHLTLLLSLAGLRVDLDLYLLLPPPTLLQDELLFLGGPASSAYALSPFSASGGWGRAGHLHPKGRELDPAAPPEGQLLREVRALGVPFVPRTSVDAWLVHSVAAGSADEAHGLLGAAAASSTGGAGASVDGGSQAVQGGGGDPRAARSGPLDAGEEEKAPAEPTAQVPDAGGCASEENGVLREKHEAVDHSSQHEENEERVSAQKENSLQQNDDDENKIAEKPDWEAEKTTESRNERHLNGTDTSFSLEDLFQLLSSQPENSLEGISLGDIPLPGSISDGMNSSAHYHVNFSQAISQDVNLHEAILLCPNNTFRRDPTARTSQSQEPFLQLNSHTTNPEQTLPGTNLTGFLSPVDNHMRNLTSQDLLYDLDINIFDEINLMSLATEDNFDPIDVSQLFDEPDSDSGLSLDSSHNNTSVIKSNSSHSVCDEGAIGYCTDHESSSHHDLEGAVGGYYPEPSKLCHLDQSDSDFHGDLTFQHVFHNHTYHLQPTAPESTSEPFPWPGKSQKIRSRYLEDTDRNLSRDEQRAKALHIPFSVDEIVGMPVDSFNSMLSRYYLTDLQVSLIRDIRRRGKNKVAAQNCRKRKLDIILNLEDDVCNLQAKKETLKREQAQCNKAINIMKQKLHDLYHDIFSRLRDDQGRPVNPNHYALQCTHDGSILIVPKELVASGHKKETQKGKRK.

Low complexity predominate over residues 133–150 (ASSTGGAGASVDGGSQAV). Disordered stretches follow at residues 133–256 (ASST…LNGT) and 330–357 (DPTA…QTLP). Basic and acidic residues-rich tracts occupy residues 193–217 (GVLR…RVSA) and 231–254 (NKIA…RHLN). Positions 333–357 (ARTSQSQEPFLQLNSHTTNPEQTLP) are enriched in polar residues. The region spanning 578 to 641 (LIRDIRRRGK…NIMKQKLHDL (64 aa)) is the bZIP domain. The tract at residues 580–599 (RDIRRRGKNKVAAQNCRKRK) is basic motif. The tract at residues 606 to 620 (LEDDVCNLQAKKETL) is leucine-zipper.

The protein belongs to the bZIP family. CNC subfamily. Heterodimer with MAFG, MAFK and other small MAF proteins that binds to the MAF recognition elements (MARE). Highly expressed in human placenta and also in B-cell and monocyte cell lines. Low expression in heart, brain, lung, skeletal muscle, kidney and pancreas.

The protein resides in the nucleus. Its function is as follows. Activates erythroid-specific, globin gene expression. This chain is Nuclear factor erythroid 2-related factor 3 (NFE2L3), found in Homo sapiens (Human).